A 302-amino-acid chain; its full sequence is Acetyl-coenzyme A carboxylase carboxyl transferase subunit beta (302 aa).

One can recognise a CoA carboxyltransferase N-terminal domain in the interval 25–294 (VWTKCDSCGQ…PQEDIVTEAA (270 aa)). Zn(2+) contacts are provided by cysteine 29, cysteine 32, cysteine 48, and cysteine 51. The C4-type zinc-finger motif lies at 29 to 51 (CDSCGQVLYRAELERNLEVCPKC).

It belongs to the AccD/PCCB family. As to quaternary structure, acetyl-CoA carboxylase is a heterohexamer composed of biotin carboxyl carrier protein (AccB), biotin carboxylase (AccC) and two subunits each of ACCase subunit alpha (AccA) and ACCase subunit beta (AccD). Requires Zn(2+) as cofactor.

The protein localises to the cytoplasm. It catalyses the reaction N(6)-carboxybiotinyl-L-lysyl-[protein] + acetyl-CoA = N(6)-biotinyl-L-lysyl-[protein] + malonyl-CoA. Its pathway is lipid metabolism; malonyl-CoA biosynthesis; malonyl-CoA from acetyl-CoA: step 1/1. Functionally, component of the acetyl coenzyme A carboxylase (ACC) complex. Biotin carboxylase (BC) catalyzes the carboxylation of biotin on its carrier protein (BCCP) and then the CO(2) group is transferred by the transcarboxylase to acetyl-CoA to form malonyl-CoA. The chain is Acetyl-coenzyme A carboxylase carboxyl transferase subunit beta from Erwinia tasmaniensis (strain DSM 17950 / CFBP 7177 / CIP 109463 / NCPPB 4357 / Et1/99).